Here is a 161-residue protein sequence, read N- to C-terminus: Phosphopantetheine adenylyltransferase (161 aa).

Thr9 contributes to the substrate binding site. ATP contacts are provided by residues 9–10 (TF) and His17. Lys41, Leu73, and Arg87 together coordinate substrate. Residues 88 to 90 (GLR), Glu98, and 123 to 129 (YQFISGT) contribute to the ATP site.

Belongs to the bacterial CoaD family. Homohexamer. Requires Mg(2+) as cofactor.

The protein localises to the cytoplasm. It catalyses the reaction (R)-4'-phosphopantetheine + ATP + H(+) = 3'-dephospho-CoA + diphosphate. The protein operates within cofactor biosynthesis; coenzyme A biosynthesis; CoA from (R)-pantothenate: step 4/5. In terms of biological role, reversibly transfers an adenylyl group from ATP to 4'-phosphopantetheine, yielding dephospho-CoA (dPCoA) and pyrophosphate. The sequence is that of Phosphopantetheine adenylyltransferase from Cupriavidus taiwanensis (strain DSM 17343 / BCRC 17206 / CCUG 44338 / CIP 107171 / LMG 19424 / R1) (Ralstonia taiwanensis (strain LMG 19424)).